Consider the following 88-residue polypeptide: MANTTSAKKATRKIARRTAINRSRRTLMRGTVRIVEEAIAKGDRDAAIQAMKRAEPELMRAGQQNIIHKNNASRKVSRLTHRIAKLAQ.

It belongs to the bacterial ribosomal protein bS20 family.

In terms of biological role, binds directly to 16S ribosomal RNA. This is Small ribosomal subunit protein bS20 from Nitrobacter winogradskyi (strain ATCC 25391 / DSM 10237 / CIP 104748 / NCIMB 11846 / Nb-255).